The sequence spans 360 residues: Ferrochelatase (360 aa).

Fe cation-binding residues include His210 and Glu291.

The protein belongs to the ferrochelatase family.

The protein resides in the cytoplasm. The enzyme catalyses heme b + 2 H(+) = protoporphyrin IX + Fe(2+). It functions in the pathway porphyrin-containing compound metabolism; protoheme biosynthesis; protoheme from protoporphyrin-IX: step 1/1. Catalyzes the ferrous insertion into protoporphyrin IX. The chain is Ferrochelatase from Pseudoalteromonas atlantica (strain T6c / ATCC BAA-1087).